The chain runs to 614 residues: Acetylcholinesterase (614 aa).

The signal sequence occupies residues 1 to 31; that stretch reads MRPPWYPLHTPSLAFPLLFLLLSLLGGGARA. C100 and C127 form a disulfide bridge. Residue S234 is the Acyl-ester intermediate of the active site. A disulfide bond links C288 and C303. An N-linked (GlcNAc...) asparagine glycan is attached at N296. E365 functions as the Charge relay system in the catalytic mechanism. A glycan (N-linked (GlcNAc...) asparagine) is linked at N381. C440 and C560 form a disulfide bridge. The active-site Charge relay system is the H478. Residue N495 is glycosylated (N-linked (GlcNAc...) asparagine).

This sequence belongs to the type-B carboxylesterase/lipase family. Isoform H generates GPI-anchored dimers; disulfide linked. Isoform T generates multiple structures, ranging from monomers and dimers to collagen-tailed and hydrophobic-tailed forms, in which catalytic tetramers are associated with anchoring proteins that attach them to the basal lamina or to cell membranes. In the collagen-tailed forms, isoform T subunits are associated with a specific collagen, COLQ, which triggers the formation of isoform T tetramers, from monomers and dimers. Interacts with PRIMA1. The interaction with PRIMA1 is required to anchor it to the basal lamina of cells and organize into tetramers. As to expression, predominates in most expressing tissues except erythrocytes where a glycophospholipid-attached form of ACHE predominates.

It localises to the synapse. The protein localises to the secreted. Its subcellular location is the cell membrane. The enzyme catalyses acetylcholine + H2O = choline + acetate + H(+). Terminates signal transduction at the neuromuscular junction by rapid hydrolysis of the acetylcholine released into the synaptic cleft. The protein is Acetylcholinesterase (Ache) of Mus musculus (Mouse).